Consider the following 209-residue polypeptide: MWKWILTHCASAFPHLPGCCCCFLLLFLVSSFPVTCQALGQDMVSQEATNCSSSSSSFSSPSSAGRHVRSYNHLQGDVRWRRLFSFTKYFLTIEKNGKVSGTKNEDCPYSVLEITSVEIGVVAVKAINSNYYLAMNKKGKLYGSKEFNNDCKLKERIEENGYNTYASFNWQHNGRQMYVALNGKGAPRRGQKTRRKNTSAHFLPMTIQT.

Positions 1–36 (MWKWILTHCASAFPHLPGCCCCFLLLFLVSSFPVTC) are cleaved as a signal peptide. Residues Asn50 and Asn197 are each glycosylated (N-linked (GlcNAc...) asparagine).

This sequence belongs to the heparin-binding growth factors family. As to quaternary structure, interacts with FGFR1 and FGFR2. Interacts with FGFBP1. As to expression, expressed abundantly in embryos and the lung, and at much lower levels in brain and heart.

It localises to the secreted. Its function is as follows. Plays an important role in the regulation of embryonic development, cell proliferation and cell differentiation. Required for normal branching morphogenesis. May play a role in wound healing. The protein is Fibroblast growth factor 10 (Fgf10) of Mus musculus (Mouse).